Reading from the N-terminus, the 144-residue chain is Large ribosomal subunit protein uL15 (144 aa).

The disordered stretch occupies residues 1-45; sequence MNLNTLSPDPGSRPSRRRVGRGIGSGLGKTCGKGHKGQKSRAGGY. Residues 21 to 31 are compositionally biased toward gly residues; it reads RGIGSGLGKTC.

This sequence belongs to the universal ribosomal protein uL15 family. As to quaternary structure, part of the 50S ribosomal subunit.

Its function is as follows. Binds to the 23S rRNA. This chain is Large ribosomal subunit protein uL15, found in Legionella pneumophila (strain Corby).